A 170-amino-acid polypeptide reads, in one-letter code: Crossover junction endodeoxyribonuclease RuvC (170 aa).

Residues Asp8, Glu67, and Asp139 contribute to the active site. The Mg(2+) site is built by Asp8, Glu67, and Asp139.

This sequence belongs to the RuvC family. In terms of assembly, homodimer which binds Holliday junction (HJ) DNA. The HJ becomes 2-fold symmetrical on binding to RuvC with unstacked arms; it has a different conformation from HJ DNA in complex with RuvA. In the full resolvosome a probable DNA-RuvA(4)-RuvB(12)-RuvC(2) complex forms which resolves the HJ. Mg(2+) serves as cofactor.

Its subcellular location is the cytoplasm. It catalyses the reaction Endonucleolytic cleavage at a junction such as a reciprocal single-stranded crossover between two homologous DNA duplexes (Holliday junction).. In terms of biological role, the RuvA-RuvB-RuvC complex processes Holliday junction (HJ) DNA during genetic recombination and DNA repair. Endonuclease that resolves HJ intermediates. Cleaves cruciform DNA by making single-stranded nicks across the HJ at symmetrical positions within the homologous arms, yielding a 5'-phosphate and a 3'-hydroxyl group; requires a central core of homology in the junction. The consensus cleavage sequence is 5'-(A/T)TT(C/G)-3'. Cleavage occurs on the 3'-side of the TT dinucleotide at the point of strand exchange. HJ branch migration catalyzed by RuvA-RuvB allows RuvC to scan DNA until it finds its consensus sequence, where it cleaves and resolves the cruciform DNA. The chain is Crossover junction endodeoxyribonuclease RuvC from Pectobacterium atrosepticum (strain SCRI 1043 / ATCC BAA-672) (Erwinia carotovora subsp. atroseptica).